Reading from the N-terminus, the 475-residue chain is Erythroid membrane-associated protein (475 aa).

The signal sequence occupies residues 1–29; it reads MEMASSAGSWLSGCLIPLVFLRLSVHVSG. Positions 30-140 constitute an Ig-like V-type domain; that stretch reads HAGDAGKFHV…GNLSKEDTVI (111 aa). At 30–155 the chain is on the extracellular side; the sequence is HAGDAGKFHV…PSVGSLSPSA (126 aa). Residues Cys50 and Cys126 are joined by a disulfide bond. N-linked (GlcNAc...) asparagine glycosylation is present at Asn132. A helical membrane pass occupies residues 156–176; it reads VALAVILPVLVLLIMVCLCLI. Topologically, residues 177 to 475 are cytoplasmic; it reads WKQRRAKEKL…ALQELKAPSF (299 aa). The region spanning 220–418 is the B30.2/SPRY domain; that stretch reads KLKRAAANSG…LVICSELHKS (199 aa). Ser418 is modified (phosphoserine).

The protein belongs to the immunoglobulin superfamily. BTN/MOG family. In terms of processing, glycosylated. Expressed in erythroid-enriched bone marrow (at protein level). Highly expressed in bone marrow and to a lower extent in leukocytes, thymus, lymph node and spleen.

It localises to the cell membrane. It is found in the cytoplasm. In terms of biological role, possible role as a cell-adhesion or receptor molecule of erythroid cells. The polypeptide is Erythroid membrane-associated protein (ERMAP) (Homo sapiens (Human)).